A 451-amino-acid chain; its full sequence is REST corepressor 3 (451 aa).

Residues 1-55 (MPGMMEKGPELLGKSRSANGGAKSPAGGGGSSANGGLHFSEPESGCSSDDEHGDV) are disordered. Residues 55–139 (VGMRVGAEYQ…KSLADLPNFT (85 aa)) form the ELM2 domain. K76 is covalently cross-linked (Glycyl lysine isopeptide (Lys-Gly) (interchain with G-Cter in SUMO2)). Positions 140–191 (PFPDEWTVEDKVLFEQAFSFHGKSFHRIQQMLPDKTIASLVKYYYSWKKTRS) constitute an SANT domain. Positions 204 to 275 (ANRHNQGDSD…SQRSKCRPPK (72 aa)) are disordered. A phosphoserine mark is found at S212 and S227. The span at 218–240 (EAHPMDGNDSDYDPKKEAKREGN) shows a compositional bias: basic and acidic residues. A Glycyl lysine isopeptide (Lys-Gly) (interchain with G-Cter in SUMO2) cross-link involves residue K249. Over residues 261–273 (QHRHHSQRSKCRP) the composition is skewed to basic residues. The stretch at 293-329 (AANTILRQLDMELISLKRQVQNAKQVNSALKQKMEGG) forms a coiled coil. A disordered region spans residues 333 to 451 (FKPPEAQTPQ…IQTDSQPSLH (119 aa)). The segment covering 349-361 (PSPPAPSSTPTPT) has biased composition (pro residues). Low complexity predominate over residues 375 to 384 (RPTLPAAPAL). Residues R401 and R413 each carry the asymmetric dimethylarginine modification. The segment covering 431 to 451 (VGGQQPPSLIGIQTDSQPSLH) has biased composition (polar residues).

Belongs to the CoREST family.

It is found in the nucleus. May act as a component of a corepressor complex that represses transcription. The chain is REST corepressor 3 (Rcor3) from Mus musculus (Mouse).